The sequence spans 199 residues: Fe/S biogenesis protein NfuA (199 aa).

2 residues coordinate [4Fe-4S] cluster: C156 and C159.

The protein belongs to the NfuA family. In terms of assembly, homodimer. It depends on [4Fe-4S] cluster as a cofactor.

Involved in iron-sulfur cluster biogenesis. Binds a 4Fe-4S cluster, can transfer this cluster to apoproteins, and thereby intervenes in the maturation of Fe/S proteins. Could also act as a scaffold/chaperone for damaged Fe/S proteins. This chain is Fe/S biogenesis protein NfuA, found in Actinobacillus pleuropneumoniae serotype 5b (strain L20).